A 377-amino-acid chain; its full sequence is DNA replication and repair protein RecF (377 aa).

30–37 (GPNGVGKT) serves as a coordination point for ATP.

The protein belongs to the RecF family.

The protein resides in the cytoplasm. The RecF protein is involved in DNA metabolism; it is required for DNA replication and normal SOS inducibility. RecF binds preferentially to single-stranded, linear DNA. It also seems to bind ATP. This chain is DNA replication and repair protein RecF, found in Salinispora tropica (strain ATCC BAA-916 / DSM 44818 / JCM 13857 / NBRC 105044 / CNB-440).